The following is a 200-amino-acid chain: Glycerol-3-phosphate acyltransferase (200 aa).

The next 5 membrane-spanning stretches (helical) occupy residues 1–21 (MITVILIFSAYLLGSISFAVV), 51–71 (VAAAVTLLGDAGKGWVAVVVA), 84–104 (VIASAALAVFLGHLFPIFLAF), 116–136 (ILLGLNLWLGILAILTWIIVA), and 159–179 (FLLQKEMLTITVLIISILLIL).

Belongs to the PlsY family. As to quaternary structure, probably interacts with PlsX.

The protein localises to the cell inner membrane. The enzyme catalyses an acyl phosphate + sn-glycerol 3-phosphate = a 1-acyl-sn-glycero-3-phosphate + phosphate. It participates in lipid metabolism; phospholipid metabolism. In terms of biological role, catalyzes the transfer of an acyl group from acyl-phosphate (acyl-PO(4)) to glycerol-3-phosphate (G3P) to form lysophosphatidic acid (LPA). This enzyme utilizes acyl-phosphate as fatty acyl donor, but not acyl-CoA or acyl-ACP. This chain is Glycerol-3-phosphate acyltransferase, found in Nitrosomonas eutropha (strain DSM 101675 / C91 / Nm57).